We begin with the raw amino-acid sequence, 738 residues long: Adhesion G protein-coupled receptor L4 (738 aa).

The first 19 residues, 1–19 (MRLLLLLVGLSTLLNHSYT), serve as a signal peptide directing secretion. The EGF-like 1 domain occupies 20–56 (QNCKTPCLPNAKCEVLDEVAACFCSTGYTGNGITICE). Over 20-480 (QNCKTPCLPN…DYNILTRITQ (461 aa)) the chain is Extracellular. 9 disulfide bridges follow: C22/C32, C26/C41, C43/C55, C61/C73, C67/C82, C84/C105, C111/C123, C117/C132, and C134/C155. The EGF-like 2; calcium-binding domain maps to 57–106 (DVDECNETSVCGDHAVCENTNGGFSCFCVEGYQTSTGKTQFTPNDGSYCQ). Residue N62 is glycosylated (N-linked (GlcNAc...) asparagine). Positions 107–156 (DVDECNETSVCGDHAVCENTNGGFSCFCVEGYQTSTGKTQFTPNDGSYCQ) constitute an EGF-like 3; calcium-binding domain. N112 carries N-linked (GlcNAc...) asparagine glycosylation. Residues N175, N226, N297, N421, N429, and N443 are each glycosylated (N-linked (GlcNAc...) asparagine). The GAIN-B domain maps to 292 to 467 (TQFDMNSTDL…AILMSPSTSI (176 aa)). Cystine bridges form between C417-C449 and C437-C451. A GPS region spans residues 417-467 (CAFWNYSVDDMNNGSWSSEGCELTYSNDTHTSCRCSHLTHFAILMSPSTSI). The chain crosses the membrane as a helical span at residues 481–501 (LGIIISLICLAICIFTFWFFS). Residues 502–522 (EIQSTRTTIHKNLCCSLFLAQ) are Cytoplasmic-facing. Residues 523-543 (LVFLVGININTNKLVCSIIAG) form a helical membrane-spanning segment. Topologically, residues 544-547 (LLHY) are extracellular. A helical membrane pass occupies residues 548 to 568 (FFLAAFAWMCIEGIYLYLIVV). Residues 569 to 580 (GLIYNKGFLHKN) are Cytoplasmic-facing. A helical membrane pass occupies residues 581-601 (FYIFGYLSPAVVVGFSASLGY). Residues 602 to 621 (RYYGTTKVCWLSTENNFIWS) are Extracellular-facing. The chain crosses the membrane as a helical span at residues 622-642 (FIGPACLIILVNLLAFGVIIY). Residues 643–666 (KVFRHTAGLKPEVSCYENIRSCAR) lie on the Cytoplasmic side of the membrane. A helical transmembrane segment spans residues 667–687 (GALALLFLLGTTWTFGVLHVV). The Extracellular portion of the chain corresponds to 688-694 (HASVVTA). Residues 695–715 (YLFTVSNAFQGMFIFLFLCVL) form a helical membrane-spanning segment. Topologically, residues 716 to 738 (SRKIQEEYYRLFKNVPCCFECLR) are cytoplasmic.

Belongs to the G-protein coupled receptor 2 family. Adhesion G-protein coupled receptor (ADGR) subfamily. In terms of assembly, heterodimer of 2 chains generated by proteolytic processing; the large extracellular N-terminal fragment and the membrane-bound C-terminal fragment predominantly remain associated and non-covalently linked. In terms of processing, proteolytically cleaved into 2 subunits, an extracellular alpha subunit and a seven-transmembrane subunit. Post-translationally, glycosylated. As to expression, abundantly expressed in heart, lung, and kidney. Less evident expression is observed in brain, skeletal muscle, liver and spleen. No expression is detected in testis.

It is found in the cell membrane. Endothelial orphan receptor that acts as a key regulator of angiogenesis. This is Adhesion G protein-coupled receptor L4 (Adgrl4) from Rattus norvegicus (Rat).